Reading from the N-terminus, the 149-residue chain is Large ribosomal subunit protein bL9 (149 aa).

This sequence belongs to the bacterial ribosomal protein bL9 family.

Its function is as follows. Binds to the 23S rRNA. The polypeptide is Large ribosomal subunit protein bL9 (Sulfurihydrogenibium sp. (strain YO3AOP1)).